The following is a 782-amino-acid chain: Endonuclease MutS2 (782 aa).

336-343 lines the ATP pocket; that stretch reads GPNTGGKT. The Smr domain occupies 707-782; the sequence is LDLRGYRYED…GFGVTVATLK (76 aa).

Belongs to the DNA mismatch repair MutS family. MutS2 subfamily. In terms of assembly, homodimer. Binds to stalled ribosomes, contacting rRNA.

Its function is as follows. Endonuclease that is involved in the suppression of homologous recombination and thus may have a key role in the control of bacterial genetic diversity. Functionally, acts as a ribosome collision sensor, splitting the ribosome into its 2 subunits. Detects stalled/collided 70S ribosomes which it binds and splits by an ATP-hydrolysis driven conformational change. Acts upstream of the ribosome quality control system (RQC), a ribosome-associated complex that mediates the extraction of incompletely synthesized nascent chains from stalled ribosomes and their subsequent degradation. Probably generates substrates for RQC. In Staphylococcus aureus (strain JH1), this protein is Endonuclease MutS2.